The primary structure comprises 211 residues: Histidine biosynthesis bifunctional protein HisIE (211 aa).

Positions 1 to 122 (MSFKAAEVSS…DAQEESQMVW (122 aa)) are phosphoribosyl-AMP cyclohydrolase. A phosphoribosyl-ATP pyrophosphohydrolase region spans residues 123-211 (LHQLEQLLAA…VVNKLKERHK (89 aa)).

In the N-terminal section; belongs to the PRA-CH family. It in the C-terminal section; belongs to the PRA-PH family.

It localises to the cytoplasm. It carries out the reaction 1-(5-phospho-beta-D-ribosyl)-ATP + H2O = 1-(5-phospho-beta-D-ribosyl)-5'-AMP + diphosphate + H(+). The enzyme catalyses 1-(5-phospho-beta-D-ribosyl)-5'-AMP + H2O = 1-(5-phospho-beta-D-ribosyl)-5-[(5-phospho-beta-D-ribosylamino)methylideneamino]imidazole-4-carboxamide. It participates in amino-acid biosynthesis; L-histidine biosynthesis; L-histidine from 5-phospho-alpha-D-ribose 1-diphosphate: step 2/9. It functions in the pathway amino-acid biosynthesis; L-histidine biosynthesis; L-histidine from 5-phospho-alpha-D-ribose 1-diphosphate: step 3/9. In Vibrio parahaemolyticus serotype O3:K6 (strain RIMD 2210633), this protein is Histidine biosynthesis bifunctional protein HisIE.